The sequence spans 235 residues: Ribitol-5-phosphate cytidylyltransferase (235 aa).

CTP contacts are provided by residues 7 to 10 (LAGG), 82 to 88 (GADRNTS), and S113.

Belongs to the IspD/TarI cytidylyltransferase family. TarI subfamily.

The catalysed reaction is D-ribitol 5-phosphate + CTP + H(+) = CDP-L-ribitol + diphosphate. The protein operates within cell wall biogenesis; poly(ribitol phosphate) teichoic acid biosynthesis. Its function is as follows. Catalyzes the transfer of the cytidylyl group of CTP to D-ribitol 5-phosphate. The sequence is that of Ribitol-5-phosphate cytidylyltransferase from Streptococcus pneumoniae serotype 2 (strain D39 / NCTC 7466).